A 93-amino-acid polypeptide reads, in one-letter code: Precursor of CEP13 (93 aa).

Residues 1–27 (MARPRISISMICLLILIVGFVLQSSQA) form the signal peptide. Positions 28-78 (RKVLVPYGTSKGLFLSALPKGNVPPSGPSDKGHTSPPDDTDQRMVPENSPE) are excised as a propeptide. A disordered region spans residues 45–93 (LPKGNVPPSGPSDKGHTSPPDDTDQRMVPENSPEIYRRLESVPSPGVGH). A hydroxyproline mark is found at proline 87 and proline 89.

This sequence belongs to the C-terminally encoded plant signaling peptide (CEP) family. In terms of assembly, interacts with CEP receptors (e.g. CEPR1 and CEPR2). Post-translationally, the mature small signaling peptide is generated by proteolytic processing of the longer precursor.

Its subcellular location is the secreted. It is found in the extracellular space. The protein resides in the apoplast. Its function is as follows. Extracellular signaling peptide that may regulate primary root growth rate and systemic nitrogen (N)-demand signaling. In Arabidopsis thaliana (Mouse-ear cress), this protein is Precursor of CEP13.